A 485-amino-acid chain; its full sequence is NADH-quinone oxidoreductase subunit N (485 aa).

Transmembrane regions (helical) follow at residues 8-28 (LIALLPLLIVGLTVVVVMLSI), 35-55 (FLNATLSVIGLNAALVSLWFV), 71-91 (GFAMLYTGLVLLASLATCTFA), 105-125 (FYLLVLIAALGGILLANANHL), 127-147 (SLFLGIELISLPLFGLVGYAF), 159-179 (YTILSAAASSFLLFGMALVYA), 203-223 (LLAGFGLMIVGLGFKLSLVPF), 235-255 (PAPVSTFLATASKIAIFGVVM), 271-291 (VVLAIIAFASIIFGNLMALSQ), 297-317 (LLGYSSISHLGYLLVALIALQ), 326-346 (VGVYLAGYLFSSLGAFGVVSL), 373-393 (AAVMTVMMLSLAGIPMTLGFI), 408-430 (WWLVGAVVVGSASGLYYYLRVAV), and 455-475 (IVVLISALLVLVLGVWPQPLI).

The protein belongs to the complex I subunit 2 family. As to quaternary structure, NDH-1 is composed of 13 different subunits. Subunits NuoA, H, J, K, L, M, N constitute the membrane sector of the complex.

It is found in the cell inner membrane. It carries out the reaction a quinone + NADH + 5 H(+)(in) = a quinol + NAD(+) + 4 H(+)(out). Functionally, NDH-1 shuttles electrons from NADH, via FMN and iron-sulfur (Fe-S) centers, to quinones in the respiratory chain. The immediate electron acceptor for the enzyme in this species is believed to be ubiquinone. Couples the redox reaction to proton translocation (for every two electrons transferred, four hydrogen ions are translocated across the cytoplasmic membrane), and thus conserves the redox energy in a proton gradient. In Shigella sonnei (strain Ss046), this protein is NADH-quinone oxidoreductase subunit N.